Here is a 496-residue protein sequence, read N- to C-terminus: Glutamyl-tRNA(Gln) amidotransferase subunit A, mitochondrial (496 aa).

Catalysis depends on charge relay system residues Lys-75 and Ser-162. Residue Ser-186 is the Acyl-ester intermediate of the active site.

It belongs to the amidase family. GatA subfamily. Subunit of the heterotrimeric GatCAB amidotransferase (AdT) complex, composed of A, B and C subunits.

The protein resides in the mitochondrion. The catalysed reaction is L-glutamyl-tRNA(Gln) + L-glutamine + ATP + H2O = L-glutaminyl-tRNA(Gln) + L-glutamate + ADP + phosphate + H(+). Its function is as follows. Allows the formation of correctly charged Gln-tRNA(Gln) through the transamidation of misacylated Glu-tRNA(Gln) in the mitochondria. The reaction takes place in the presence of glutamine and ATP through an activated gamma-phospho-Glu-tRNA(Gln). This chain is Glutamyl-tRNA(Gln) amidotransferase subunit A, mitochondrial, found in Pediculus humanus subsp. corporis (Body louse).